A 558-amino-acid chain; its full sequence is MDQNSYRRRSSPIRTTTGGSKSVNFSELLQMKYLSSGTMKLTRTFTTCLIVFSVLVAFSMIFHQHPSDSNRIMGFAEARVLDAGVFPNVTNINSDKLLGGLLASGFDEDSCLSRYQSVHYRKPSPYKPSSYLISKLRNYEKLHKRCGPGTESYKKALKQLDQEHIDGDGECKYVVWISFSGLGNRILSLASVFLYALLTDRVLLVDRGKDMDDLFCEPFLGMSWLLPLDFPMTDQFDGLNQESSRCYGYMVKNQVIDTEGTLSHLYLHLVHDYGDHDKMFFCEGDQTFIGKVPWLIVKTDNYFVPSLWLIPGFDDELNKLFPQKATVFHHLGRYLFHPTNQVWGLVTRYYEAYLSHADEKIGIQVRVFDEDPGPFQHVMDQISSCTQKEKLLPEVDTLVERSRHVNTPKHKAVLVTSLNAGYAENLKSMYWEYPTSTGEIIGVHQPSQEGYQQTEKKMHNGKALAEMYLLSLTDNLVTSAWSTFGYVAQGLGGLKPWILYRPENRTTPDPSCGRAMSMEPCFHSPPFYDCKAKTGIDTGTLVPHVRHCEDISWGLKLV.

The Cytoplasmic segment spans residues 1–43 (MDQNSYRRRSSPIRTTTGGSKSVNFSELLQMKYLSSGTMKLTR). Residues 44–64 (TFTTCLIVFSVLVAFSMIFHQ) form a helical; Signal-anchor for type II membrane protein membrane-spanning segment. At 65–558 (HPSDSNRIMG…EDISWGLKLV (494 aa)) the chain is on the lumenal side. Asn88 and Asn504 each carry an N-linked (GlcNAc...) asparagine glycan.

It belongs to the glycosyltransferase 37 family. As to quaternary structure, homodimer. Interacts with MUR3, XLT2, XXT2 and XXT5. As to expression, expressed in roots, stems, leaves, flowers, siliques and seedlings.

It localises to the golgi apparatus. The protein localises to the golgi stack membrane. It is found in the golgi apparatus membrane. In terms of biological role, involved in cell wall biosynthesis. Is both necessary and sufficient for the addition of the terminal fucosyl residue on xyloglucan side chains, but is not involved in the fucosylation of other cell wall components. Associates with other xyloglucan-synthesizing enzymes to form multiprotein complexes for xyloglucan synthesis in the Golgi. In Arabidopsis thaliana (Mouse-ear cress), this protein is Galactoside 2-alpha-L-fucosyltransferase (FUT1).